The primary structure comprises 244 residues: Salivary gland SP38-40.A protein (244 aa).

The signal sequence occupies residues 1–21 (MRIKFLVVLAVICLFAHYASA). 3 disordered regions span residues 23 to 91 (GMGG…EKKQ), 137 to 169 (PPPG…LRKE), and 206 to 244 (VQGK…DAKK). Composition is skewed to basic and acidic residues over residues 26-86 (GDKK…EVKK) and 157-169 (PPKE…LRKE). A run of 2 repeats spans residues 29–34 (KPKDAP) and 35–40 (KPKDAP). The segment at 29–47 (KPKDAPKPKDAPKPKEVKP) is 3 X 6 AA approximate tandem repeats of K-P-K-D-A-P. The 1-3; approximate repeat unit spans residues 41 to 47 (KPKEVKP). 2 consecutive repeat copies span residues 156–159 (KPPK) and 161–164 (KPPK). Residues 156–168 (KPPKEKPPKKLRK) form a 3 X 4 AA approximate tandem repeats of K-P-P-K region. Residues 165-168 (KLRK) form a 2-3; approximate repeat. Basic residues predominate over residues 209–224 (KQKKGAKKAKGGKKAA). 3 consecutive repeat copies span residues 225-228 (PKPG), 229-232 (PKPG), and 233-236 (PKQA). The segment at 225–240 (PKPGPKPGPKQADKPK) is 4 X 4 AA approximate tandem repeats of P-K-[PQ]-[GA]. The segment covering 235 to 244 (QADKPKDAKK) has biased composition (basic and acidic residues). Residues 237–240 (DKPK) form a 3-4; approximate repeat.

As to expression, salivary gland.

The protein localises to the secreted. In terms of biological role, used by the larvae to construct a supramolecular structure, the larval tube. In Chironomus tentans (Midge), this protein is Salivary gland SP38-40.A protein (SP38-40.A).